Here is a 147-residue protein sequence, read N- to C-terminus: uncharacterized protein (147 aa).

This is an uncharacterized protein from Mycolicibacterium smegmatis (Mycobacterium smegmatis).